Here is a 2539-residue protein sequence, read N- to C-terminus: Zinc finger FYVE domain-containing protein 26 (2539 aa).

Phosphoserine is present on residues S297, S615, S619, and S703. 3 disordered regions span residues 594 to 637 (HLPE…SLGV), 699 to 724 (ISSRSPPEKPKQESQSCSGSRDGLQS), and 738 to 806 (WRHK…SLSA). Basic residues predominate over residues 764 to 774 (PSLRRGRRTRR). The span at 787–805 (SLESTSSELSTSTSEGSLS) shows a compositional bias: low complexity. At S800 the chain carries Phosphoserine. Positions 868–895 (MFMERYQEVIQELAQVEHKIENQNSDAG) form a coiled coil. The segment at 1267–1296 (DLPLSTPSSPRTTENPTLERKPYSSPRDSS) is disordered. The segment covering 1271–1282 (STPSSPRTTENP) has biased composition (polar residues). Phosphoserine is present on residues S1742, S1764, S1780, and S1782. The tract at residues 1754–1808 (ADPETLPRSPSAEFSPAAPPGISSIHSPSLRERSFPPTQPSQEFVPPATPPARHQ) is disordered. Low complexity predominate over residues 1760 to 1769 (PRSPSAEFSP). The segment at 1812 to 1872 (DETESICMVC…VCDQCYSYCN (61 aa)) adopts an FYVE-type zinc-finger fold. Positions 1818, 1821, 1835, 1838, 1843, 1846, 1864, and 1867 each coordinate Zn(2+).

As to quaternary structure, interacts with AP5Z1, AP5B1, AP5S1 and SPG11. Interacts with TTC19 and KIF13A. Strongest expression in the adrenal gland, bone marrow, adult brain, fetal brain, lung, placenta, prostate, skeletal muscle, testis, thymus, and retina. Intermediate levels are detected in other structures, including the spinal cord.

It is found in the cytoplasm. The protein localises to the cytoskeleton. It localises to the microtubule organizing center. Its subcellular location is the centrosome. The protein resides in the midbody. Its function is as follows. Phosphatidylinositol 3-phosphate-binding protein required for the abscission step in cytokinesis: recruited to the midbody during cytokinesis and acts as a regulator of abscission. May also be required for efficient homologous recombination DNA double-strand break repair. This chain is Zinc finger FYVE domain-containing protein 26 (ZFYVE26), found in Homo sapiens (Human).